The following is a 1008-amino-acid chain: Pheromone-regulated membrane protein 10 (1008 aa).

Disordered regions lie at residues 1 to 273 (MSQS…TFLG), 342 to 384 (KLPE…FYTP), and 477 to 506 (KNDF…TQDE). Over residues 70-85 (DTIISNASTTNNSSSD) the composition is skewed to low complexity. A compositionally biased stretch (polar residues) spans 95 to 111 (GENSNLPNFNFSANQVH). Acidic residues-rich tracts occupy residues 116–132 (ANED…EDTF) and 143–161 (GSDE…EDKE). Basic and acidic residues predominate over residues 162 to 186 (EVVNEKEEIADDLHSKSSKTSRESK). The span at 188–204 (FNAGTKNSRRSLNSLQR) shows a compositional bias: polar residues. Basic and acidic residues predominate over residues 205–214 (NETDVTDQLK). The span at 215–225 (RTTSTTSSSKR) shows a compositional bias: low complexity. Basic and acidic residues predominate over residues 226–239 (SNSDKRTGFKDILR). Over residues 346-364 (GTSSDQQLDYSDTSASNLI) the composition is skewed to polar residues. The segment covering 483-498 (GPKRMANKIPGRKHGA) has biased composition (basic residues). 10 helical membrane-spanning segments follow: residues 683–703 (SPWL…PFAF), 707–727 (WYDV…QFFV), 736–756 (SVFE…IGSI), 762–782 (FCFS…YIIL), 800–820 (MFYA…GASL), 838–858 (IKQD…LGLI), 866–886 (LPIM…AGKH), 892–912 (VTEF…NLYS), 917–937 (GMAV…GIAS), and 978–998 (VKVS…VYPF).

This sequence belongs to the ThrE exporter (TC 2.A.79) family.

Its subcellular location is the membrane. This is Pheromone-regulated membrane protein 10 from Debaryomyces hansenii (strain ATCC 36239 / CBS 767 / BCRC 21394 / JCM 1990 / NBRC 0083 / IGC 2968) (Yeast).